The primary structure comprises 334 residues: Holliday junction branch migration complex subunit RuvB (334 aa).

A large ATPase domain (RuvB-L) region spans residues 4–186; the sequence is ADRLIAPISN…FGIVQRLEYY (183 aa). Residues isoleucine 25, arginine 26, glycine 67, lysine 70, threonine 71, threonine 72, 133–135, arginine 176, tyrosine 186, and arginine 223 contribute to the ATP site; that span reads EDY. Threonine 71 is a Mg(2+) binding site. The segment at 187–257 is small ATPAse domain (RuvB-S); sequence KVADLQHIVQ…TADRALNMLD (71 aa). The tract at residues 260–334 is head domain (RuvB-H); that stretch reads HQGFDYMDRK…RAYLHFGIEK (75 aa). Residues arginine 315 and arginine 320 each contribute to the DNA site.

This sequence belongs to the RuvB family. As to quaternary structure, homohexamer. Forms an RuvA(8)-RuvB(12)-Holliday junction (HJ) complex. HJ DNA is sandwiched between 2 RuvA tetramers; dsDNA enters through RuvA and exits via RuvB. An RuvB hexamer assembles on each DNA strand where it exits the tetramer. Each RuvB hexamer is contacted by two RuvA subunits (via domain III) on 2 adjacent RuvB subunits; this complex drives branch migration. In the full resolvosome a probable DNA-RuvA(4)-RuvB(12)-RuvC(2) complex forms which resolves the HJ.

The protein resides in the cytoplasm. It carries out the reaction ATP + H2O = ADP + phosphate + H(+). In terms of biological role, the RuvA-RuvB-RuvC complex processes Holliday junction (HJ) DNA during genetic recombination and DNA repair, while the RuvA-RuvB complex plays an important role in the rescue of blocked DNA replication forks via replication fork reversal (RFR). RuvA specifically binds to HJ cruciform DNA, conferring on it an open structure. The RuvB hexamer acts as an ATP-dependent pump, pulling dsDNA into and through the RuvAB complex. RuvB forms 2 homohexamers on either side of HJ DNA bound by 1 or 2 RuvA tetramers; 4 subunits per hexamer contact DNA at a time. Coordinated motions by a converter formed by DNA-disengaged RuvB subunits stimulates ATP hydrolysis and nucleotide exchange. Immobilization of the converter enables RuvB to convert the ATP-contained energy into a lever motion, pulling 2 nucleotides of DNA out of the RuvA tetramer per ATP hydrolyzed, thus driving DNA branch migration. The RuvB motors rotate together with the DNA substrate, which together with the progressing nucleotide cycle form the mechanistic basis for DNA recombination by continuous HJ branch migration. Branch migration allows RuvC to scan DNA until it finds its consensus sequence, where it cleaves and resolves cruciform DNA. The polypeptide is Holliday junction branch migration complex subunit RuvB (Vibrio cholerae serotype O1 (strain ATCC 39315 / El Tor Inaba N16961)).